The following is a 490-amino-acid chain: GTPase Der (490 aa).

EngA-type G domains are found at residues 3-166 (PVVA…MEDL) and 203-376 (IKLA…DSST). GTP contacts are provided by residues 9–16 (GRPNVGKS), 56–60 (DTGGI), 118–121 (NKTD), 209–216 (GRPNVGKS), 256–260 (DTAGV), and 321–324 (NKWD). The 85-residue stretch at 377–461 (RRVGTSMLTR…PIRIQFKEGE (85 aa)) folds into the KH-like domain.

The protein belongs to the TRAFAC class TrmE-Era-EngA-EngB-Septin-like GTPase superfamily. EngA (Der) GTPase family. In terms of assembly, associates with the 50S ribosomal subunit.

Functionally, GTPase that plays an essential role in the late steps of ribosome biogenesis. The polypeptide is GTPase Der (Escherichia coli O7:K1 (strain IAI39 / ExPEC)).